Consider the following 1140-residue polypeptide: Centrosomal protein of 135 kDa (1140 aa).

Residues 11-64 form a homodimerization region; that stretch reads NIRKRLDQLGYRQTLTVECLPLVEKLFSDLVHTTESLRQSKLSAVKAEKESANF. Coiled-coil stretches lie at residues 75-151 and 199-416; these read NARL…KNLH and LQVA…FAVT. S383 and S439 each carry phosphoserine. Coiled-coil stretches lie at residues 447–644, 668–1036, and 1079–1113; these read LKGI…LENK, SLRI…LESL, and NTML…AIQE. At S688 the chain carries Phosphoserine. The segment at 1114–1140 is disordered; the sequence is MRRHGLATPPLSSTLRSPSHSPEHRNV. T1121 carries the post-translational modification Phosphothreonine. The span at 1121–1133 shows a compositional bias: low complexity; sequence TPPLSSTLRSPSH. At S1130 the chain carries Phosphoserine.

This sequence belongs to the CEP135/TSGA10 family. Homodimer. Interacts with DCTN2. Interacts with CEP250.

It localises to the cytoplasm. The protein resides in the cytoskeleton. Its subcellular location is the microtubule organizing center. The protein localises to the centrosome. It is found in the centriole. Centrosomal microtubule-binding protein involved in centriole biogenesis. Acts as a scaffolding protein during early centriole biogenesis. Required for the targeting of centriole satellite proteins to centrosomes such as of PCM1, SSX2IP and CEP290 and recruitment of WRAP73 to centrioles. Also required for centriole-centriole cohesion during interphase by acting as a platform protein for CEP250 at the centriole. Required for the recruitment of CEP295 to the proximal end of new-born centrioles at the centriolar microtubule wall during early S phase in a PLK4-dependent manner. This chain is Centrosomal protein of 135 kDa, found in Homo sapiens (Human).